A 409-amino-acid polypeptide reads, in one-letter code: Multifunctional CCA protein (409 aa).

Gly-8 and Arg-11 together coordinate ATP. 2 residues coordinate CTP: Gly-8 and Arg-11. Mg(2+) contacts are provided by Asp-21 and Asp-23. ATP contacts are provided by Arg-91, Arg-137, and Arg-140. Residues Arg-91, Arg-137, and Arg-140 each contribute to the CTP site. Residues 228–329 form the HD domain; it reads TGVHTLSVLE…LELLQSFDVY (102 aa).

This sequence belongs to the tRNA nucleotidyltransferase/poly(A) polymerase family. Bacterial CCA-adding enzyme type 1 subfamily. As to quaternary structure, monomer. Can also form homodimers and oligomers. Mg(2+) is required as a cofactor. The cofactor is Ni(2+).

It carries out the reaction a tRNA precursor + 2 CTP + ATP = a tRNA with a 3' CCA end + 3 diphosphate. It catalyses the reaction a tRNA with a 3' CCA end + 2 CTP + ATP = a tRNA with a 3' CCACCA end + 3 diphosphate. Catalyzes the addition and repair of the essential 3'-terminal CCA sequence in tRNAs without using a nucleic acid template. Adds these three nucleotides in the order of C, C, and A to the tRNA nucleotide-73, using CTP and ATP as substrates and producing inorganic pyrophosphate. tRNA 3'-terminal CCA addition is required both for tRNA processing and repair. Also involved in tRNA surveillance by mediating tandem CCA addition to generate a CCACCA at the 3' terminus of unstable tRNAs. While stable tRNAs receive only 3'-terminal CCA, unstable tRNAs are marked with CCACCA and rapidly degraded. The sequence is that of Multifunctional CCA protein from Pseudomonas fluorescens (strain SBW25).